The primary structure comprises 362 residues: Probable protein phosphatase 2C 11 (362 aa).

The region spanning lysine 23–phenylalanine 329 is the PPM-type phosphatase domain. Mn(2+) contacts are provided by aspartate 57, glycine 58, aspartate 272, and aspartate 320.

It belongs to the PP2C family. Requires Mg(2+) as cofactor. Mn(2+) is required as a cofactor.

It catalyses the reaction O-phospho-L-seryl-[protein] + H2O = L-seryl-[protein] + phosphate. The catalysed reaction is O-phospho-L-threonyl-[protein] + H2O = L-threonyl-[protein] + phosphate. The protein is Probable protein phosphatase 2C 11 of Oryza sativa subsp. japonica (Rice).